Here is a 286-residue protein sequence, read N- to C-terminus: 4-diphosphocytidyl-2-C-methyl-D-erythritol kinase (286 aa).

The active site involves lysine 11. 94–104 contributes to the ATP binding site; it reads PMGGGIGGGSS. Residue aspartate 136 is part of the active site.

Belongs to the GHMP kinase family. IspE subfamily.

It catalyses the reaction 4-CDP-2-C-methyl-D-erythritol + ATP = 4-CDP-2-C-methyl-D-erythritol 2-phosphate + ADP + H(+). The protein operates within isoprenoid biosynthesis; isopentenyl diphosphate biosynthesis via DXP pathway; isopentenyl diphosphate from 1-deoxy-D-xylulose 5-phosphate: step 3/6. Functionally, catalyzes the phosphorylation of the position 2 hydroxy group of 4-diphosphocytidyl-2C-methyl-D-erythritol. This Pseudomonas entomophila (strain L48) protein is 4-diphosphocytidyl-2-C-methyl-D-erythritol kinase.